The sequence spans 165 residues: (2E)-enoyl-[ACP] glycyltransferase (165 aa).

It belongs to the FcoT family.

The catalysed reaction is a (3R)-3-[(carboxymethyl)amino]fatty acid + holo-[ACP] + H(+) = a (2E)-enoyl-[ACP] + glycine + H2O. The enzyme catalyses (3R)-3-[(carboxymethyl)amino]butanoate + holo-[ACP] + H(+) = (2E)-butenoyl-[ACP] + glycine + H2O. In terms of biological role, involved in the biosynthesis of a unique class of isonitrile lipopeptides (INLPs). Catalyzes a Michael addition of glycine to the beta-position of an alpha,beta-unsaturated fatty acyl-[ACP], producing a (3R)-3-[(carboxymethyl)amino]fatty acid. Acts on the (2E)-butenoyl moiety loaded on the acyl-carrier protein ScoB, forming the product (3R)-3-[(carboxymethyl)amino]butanoate released from ScoB. This Streptomyces coeruleorubidus protein is (2E)-enoyl-[ACP] glycyltransferase.